The sequence spans 116 residues: Ribosome-binding factor A (116 aa).

The protein belongs to the RbfA family. As to quaternary structure, monomer. Binds 30S ribosomal subunits, but not 50S ribosomal subunits or 70S ribosomes.

The protein localises to the cytoplasm. Its function is as follows. One of several proteins that assist in the late maturation steps of the functional core of the 30S ribosomal subunit. Associates with free 30S ribosomal subunits (but not with 30S subunits that are part of 70S ribosomes or polysomes). Required for efficient processing of 16S rRNA. May interact with the 5'-terminal helix region of 16S rRNA. The protein is Ribosome-binding factor A of Streptococcus uberis (strain ATCC BAA-854 / 0140J).